We begin with the raw amino-acid sequence, 189 residues long: MATYSTNEFKGGLKIMLDGDPFTIVENEFVKPGKGQAFNRVKLRNLKTNRVVEKTFKSGESVEAADVMETELQYLYNDGEFWYFMDPTSFEQKAAPSSAVGDAANWIKEQDTCTVILWNDTPLQVEAPNFVDLKVIETDPGVRGDTSSGGTKPAKLETGATVRVPLFIEEGEVLRVDTRKAEYVSRAKD.

Lys34 is subject to N6-(3,6-diaminohexanoyl)-5-hydroxylysine.

This sequence belongs to the elongation factor P family. May be beta-lysylated on the epsilon-amino group of Lys-34 by the combined action of EpmA and EpmB, and then hydroxylated on the C5 position of the same residue by EpmC (if this protein is present). Lysylation is critical for the stimulatory effect of EF-P on peptide-bond formation. The lysylation moiety may extend toward the peptidyltransferase center and stabilize the terminal 3-CCA end of the tRNA. Hydroxylation of the C5 position on Lys-34 may allow additional potential stabilizing hydrogen-bond interactions with the P-tRNA.

It localises to the cytoplasm. Its pathway is protein biosynthesis; polypeptide chain elongation. Functionally, involved in peptide bond synthesis. Alleviates ribosome stalling that occurs when 3 or more consecutive Pro residues or the sequence PPG is present in a protein, possibly by augmenting the peptidyl transferase activity of the ribosome. Modification of Lys-34 is required for alleviation. This Halorhodospira halophila (strain DSM 244 / SL1) (Ectothiorhodospira halophila (strain DSM 244 / SL1)) protein is Elongation factor P.